Here is a 332-residue protein sequence, read N- to C-terminus: Adenine deaminase (332 aa).

Residues histidine 16, histidine 18, and histidine 196 each coordinate Zn(2+). Glutamate 199 serves as the catalytic Proton donor. Aspartate 277 contacts Zn(2+). Aspartate 278 provides a ligand contact to substrate.

The protein belongs to the metallo-dependent hydrolases superfamily. Adenosine and AMP deaminases family. Adenine deaminase type 2 subfamily. Requires Zn(2+) as cofactor.

It catalyses the reaction adenine + H2O + H(+) = hypoxanthine + NH4(+). Functionally, catalyzes the hydrolytic deamination of adenine to hypoxanthine. Plays an important role in the purine salvage pathway and in nitrogen catabolism. The polypeptide is Adenine deaminase (Acinetobacter baylyi (strain ATCC 33305 / BD413 / ADP1)).